The sequence spans 338 residues: Anthranilate phosphoribosyltransferase (338 aa).

Residues Gly81, 84–85 (GD), Thr89, 91–94 (NIST), 109–117 (KHGNRNLSS), and Ala121 each bind 5-phospho-alpha-D-ribose 1-diphosphate. Gly81 provides a ligand contact to anthranilate. Ser93 contributes to the Mg(2+) binding site. Asn112 contacts anthranilate. Arg167 contacts anthranilate. Mg(2+) contacts are provided by Asp226 and Glu227.

Belongs to the anthranilate phosphoribosyltransferase family. Homodimer. The cofactor is Mg(2+).

It catalyses the reaction N-(5-phospho-beta-D-ribosyl)anthranilate + diphosphate = 5-phospho-alpha-D-ribose 1-diphosphate + anthranilate. It participates in amino-acid biosynthesis; L-tryptophan biosynthesis; L-tryptophan from chorismate: step 2/5. Functionally, catalyzes the transfer of the phosphoribosyl group of 5-phosphorylribose-1-pyrophosphate (PRPP) to anthranilate to yield N-(5'-phosphoribosyl)-anthranilate (PRA). The sequence is that of Anthranilate phosphoribosyltransferase from Cereibacter sphaeroides (strain ATCC 17023 / DSM 158 / JCM 6121 / CCUG 31486 / LMG 2827 / NBRC 12203 / NCIMB 8253 / ATH 2.4.1.) (Rhodobacter sphaeroides).